The primary structure comprises 364 residues: tRNA 2-selenouridine synthase (364 aa).

Residues 14 to 137 (LIADTPIIDV…LRQTTIQATI (124 aa)) enclose the Rhodanese domain. The active-site S-selanylcysteine intermediate is the Cys-97.

The protein belongs to the SelU family. Monomer.

The catalysed reaction is 5-methylaminomethyl-2-thiouridine(34) in tRNA + selenophosphate + (2E)-geranyl diphosphate + H2O + H(+) = 5-methylaminomethyl-2-selenouridine(34) in tRNA + (2E)-thiogeraniol + phosphate + diphosphate. It carries out the reaction 5-methylaminomethyl-2-thiouridine(34) in tRNA + (2E)-geranyl diphosphate = 5-methylaminomethyl-S-(2E)-geranyl-thiouridine(34) in tRNA + diphosphate. It catalyses the reaction 5-methylaminomethyl-S-(2E)-geranyl-thiouridine(34) in tRNA + selenophosphate + H(+) = 5-methylaminomethyl-2-(Se-phospho)selenouridine(34) in tRNA + (2E)-thiogeraniol. The enzyme catalyses 5-methylaminomethyl-2-(Se-phospho)selenouridine(34) in tRNA + H2O = 5-methylaminomethyl-2-selenouridine(34) in tRNA + phosphate. Functionally, involved in the post-transcriptional modification of the uridine at the wobble position (U34) of tRNA(Lys), tRNA(Glu) and tRNA(Gln). Catalyzes the conversion of 2-thiouridine (S2U-RNA) to 2-selenouridine (Se2U-RNA). Acts in a two-step process involving geranylation of 2-thiouridine (S2U) to S-geranyl-2-thiouridine (geS2U) and subsequent selenation of the latter derivative to 2-selenouridine (Se2U) in the tRNA chain. The protein is tRNA 2-selenouridine synthase of Escherichia coli O8 (strain IAI1).